The primary structure comprises 188 residues: Elongation factor P (188 aa).

N6-(3,6-diaminohexanoyl)-5-hydroxylysine is present on Lys34.

Belongs to the elongation factor P family. May be beta-lysylated on the epsilon-amino group of Lys-34 by the combined action of EpmA and EpmB, and then hydroxylated on the C5 position of the same residue by EpmC (if this protein is present). Lysylation is critical for the stimulatory effect of EF-P on peptide-bond formation. The lysylation moiety may extend toward the peptidyltransferase center and stabilize the terminal 3-CCA end of the tRNA. Hydroxylation of the C5 position on Lys-34 may allow additional potential stabilizing hydrogen-bond interactions with the P-tRNA.

Its subcellular location is the cytoplasm. Its pathway is protein biosynthesis; polypeptide chain elongation. In terms of biological role, involved in peptide bond synthesis. Alleviates ribosome stalling that occurs when 3 or more consecutive Pro residues or the sequence PPG is present in a protein, possibly by augmenting the peptidyl transferase activity of the ribosome. Modification of Lys-34 is required for alleviation. This Xanthomonas oryzae pv. oryzae (strain MAFF 311018) protein is Elongation factor P.